The sequence spans 419 residues: Multifunctional CCA protein (419 aa).

Residues G8 and R11 each coordinate ATP. CTP-binding residues include G8 and R11. Mg(2+)-binding residues include D21 and D23. R91, R141, and R144 together coordinate ATP. CTP-binding residues include R91, R141, and R144. Positions 230 to 331 (TGVHVMMVLD…VRLLERCDAL (102 aa)) constitute an HD domain.

Belongs to the tRNA nucleotidyltransferase/poly(A) polymerase family. Bacterial CCA-adding enzyme type 1 subfamily. In terms of assembly, monomer. Can also form homodimers and oligomers. It depends on Mg(2+) as a cofactor. The cofactor is Ni(2+).

The enzyme catalyses a tRNA precursor + 2 CTP + ATP = a tRNA with a 3' CCA end + 3 diphosphate. It catalyses the reaction a tRNA with a 3' CCA end + 2 CTP + ATP = a tRNA with a 3' CCACCA end + 3 diphosphate. Catalyzes the addition and repair of the essential 3'-terminal CCA sequence in tRNAs without using a nucleic acid template. Adds these three nucleotides in the order of C, C, and A to the tRNA nucleotide-73, using CTP and ATP as substrates and producing inorganic pyrophosphate. tRNA 3'-terminal CCA addition is required both for tRNA processing and repair. Also involved in tRNA surveillance by mediating tandem CCA addition to generate a CCACCA at the 3' terminus of unstable tRNAs. While stable tRNAs receive only 3'-terminal CCA, unstable tRNAs are marked with CCACCA and rapidly degraded. This Paracidovorax citrulli (strain AAC00-1) (Acidovorax citrulli) protein is Multifunctional CCA protein.